The primary structure comprises 129 residues: Histone H2A-III (129 aa).

It belongs to the histone H2A family. As to quaternary structure, the nucleosome is a histone octamer containing two molecules each of H2A, H2B, H3 and H4 assembled in one H3-H4 heterotetramer and two H2A-H2B heterodimers. The octamer wraps approximately 147 bp of DNA.

It is found in the nucleus. The protein resides in the chromosome. Core component of nucleosome. Nucleosomes wrap and compact DNA into chromatin, limiting DNA accessibility to the cellular machineries which require DNA as a template. Histones thereby play a central role in transcription regulation, DNA repair, DNA replication and chromosomal stability. DNA accessibility is regulated via a complex set of post-translational modifications of histones, also called histone code, and nucleosome remodeling. This is Histone H2A-III from Volvox carteri (Green alga).